Here is a 1096-residue protein sequence, read N- to C-terminus: Serine/threonine-protein kinase mig-15 (1096 aa).

In terms of domain architecture, Protein kinase spans 21 to 288 (FELIEVVGNG…TGALLRHPFI (268 aa)). ATP is bound by residues 27–35 (VGNGTYGQV) and Lys-50. Residue Asp-151 is the Proton acceptor of the active site. The segment covering 293–315 (HEQTIRHSIKEHIDRNRRVKKDD) has biased composition (basic and acidic residues). Disordered regions lie at residues 293–351 (HEQT…MIPM), 380–492 (LPQQ…QQSR), 517–545 (KMGG…EASI), and 574–664 (NGEG…DLLP). Positions 316–328 (ADYEYSGSEDDEP) are enriched in acidic residues. Residues 380 to 393 (LPQQPAPAPFQYQQ) are compositionally biased toward low complexity. 2 stretches are compositionally biased toward basic and acidic residues: residues 397 to 408 (VEPRRESSEVKL) and 453 to 472 (NYEK…ERQA). Positions 532-541 (SPPPPAPPPR) are enriched in pro residues. Residues 629-642 (LDDDDSDSDNEEGN) are compositionally biased toward acidic residues. Residues 778-1070 (SGEILCAALW…KFLCERNDKV (293 aa)) form the CNH domain.

The protein belongs to the protein kinase superfamily. STE Ser/Thr protein kinase family. STE20 subfamily.

The catalysed reaction is L-seryl-[protein] + ATP = O-phospho-L-seryl-[protein] + ADP + H(+). The enzyme catalyses L-threonyl-[protein] + ATP = O-phospho-L-threonyl-[protein] + ADP + H(+). Its function is as follows. Involved in cell migration and signal transduction. Important in several developmental processes including epidermal development, Q neuroblast migrations and muscle arm targeting. Required with ina-1/pat-3 to stabilize the commissural axons growth cone along a precise direction and are required for the cell to respond appropriately when signaling in the growth cone must change. During gonad morphogenesis, involved in distal tip cell (DTC) migration from the dorsal side of the hermaphrodite body to the midbody to allow for formation of gonad arms. This Caenorhabditis elegans protein is Serine/threonine-protein kinase mig-15 (mig-15).